The sequence spans 192 residues: Succinate dehydrogenase cytochrome b560 subunit, mitochondrial (192 aa).

A mitochondrion-targeting transit peptide spans 1–27 (MFGRTLNTFTSRNAPLVRNFDKFIVNN). Residues 48-83 (YSTQAKKPFTITEKRIDELKTPYQPTSPHLTIYKFP) are Mitochondrial matrix-facing. A helical membrane pass occupies residues 84 to 113 (LPAVMSIMHRATGICLALGITGLAGVTLFA). Residues 114–131 (PHDAIHYIQLLHTQYPAL) lie on the Mitochondrial intermembrane side of the membrane. Residues 132–156 (VYPAKFAVALPLTYHFCTGVRHIIW) traverse the membrane as a helical segment. His-146 lines the heme b pocket. The Mitochondrial matrix segment spans residues 157-164 (DETVKGLS). A helical membrane pass occupies residues 165-186 (ISQIESSGKVLLAVVAVLSTIF). Residues 187–189 (TFV) lie on the Mitochondrial intermembrane side of the membrane.

This sequence belongs to the cytochrome b560 family. Component of complex II composed of four subunits: the flavoprotein (FP) sdha, iron-sulfur protein (IP) sdhb, and a cytochrome b560 composed of sdhc and sdhd. Requires heme b as cofactor.

It is found in the mitochondrion inner membrane. It functions in the pathway carbohydrate metabolism; tricarboxylic acid cycle. Membrane-anchoring subunit of succinate dehydrogenase (SDH) that is involved in complex II of the mitochondrial electron transport chain and is responsible for transferring electrons from succinate to ubiquinone (coenzyme Q). This is Succinate dehydrogenase cytochrome b560 subunit, mitochondrial (sdhC) from Dictyostelium discoideum (Social amoeba).